We begin with the raw amino-acid sequence, 438 residues long: Na(+)/H(+) antiporter NhaA 2 (438 aa).

11 helical membrane-spanning segments follow: residues 21 to 41, 66 to 86, 102 to 122, 130 to 150, 160 to 180, 183 to 203, 206 to 226, 308 to 328, 341 to 361, 376 to 396, and 410 to 430; these read SGGI…NSPW, LHHW…GLEL, MLPI…FHFI, KGWG…LALL, IFLT…IALF, GELA…LIAG, LGVQ…VVLL, WVIF…VLQL, LGVA…FSWI, WMDV…SLFI, and AKLG…TVLS.

The protein belongs to the NhaA Na(+)/H(+) (TC 2.A.33) antiporter family.

It is found in the cell inner membrane. It catalyses the reaction Na(+)(in) + 2 H(+)(out) = Na(+)(out) + 2 H(+)(in). Functionally, na(+)/H(+) antiporter that extrudes sodium in exchange for external protons. This Syntrophotalea carbinolica (strain DSM 2380 / NBRC 103641 / GraBd1) (Pelobacter carbinolicus) protein is Na(+)/H(+) antiporter NhaA 2.